Here is a 340-residue protein sequence, read N- to C-terminus: Entry-fusion complex protein OPG094 (340 aa).

The disordered stretch occupies residues 1–20; sequence MGGGVSVELPKRDPPPGVPT. Gly2 is lipidated: N-myristoyl glycine; by host. Residues 2–319 are Virion surface-facing; sequence GGGVSVELPK…VQHNIKHSFD (318 aa). A helical; Signal-anchor for type II membrane protein transmembrane segment spans residues 320–340; the sequence is LKLHLISLLSLLVIWILIVAI.

The protein belongs to the orthopoxvirus OPG086 family. As to quaternary structure, interacts with OPG143. Component of the entry fusion complex (EFC) composed of OPG053, OPG076, OPG086, OPG094, OPG095, OPG099, OPG107, OPG143, OPG104, OPG147 and OPG155. Except for OPG095 and OPG053, each of the EFC proteins is required for assembly or stability of the complex. In terms of processing, unglycosylated because produced in viral factories instead of the classic ER -Golgi route.

It is found in the virion membrane. Its function is as follows. Component of the entry fusion complex (EFC), which consists of 11 proteins. During cell infection, this complex mediates entry of the virion core into the host cytoplasm by a two-step mechanism consisting of lipid mixing of the viral and cellular membranes and subsequent pore formation. The chain is Entry-fusion complex protein OPG094 (OPG094) from Variola virus.